Reading from the N-terminus, the 257-residue chain is MADTWSIGAHTFTSRLLVGTGKYPDFTTMQRALVASGAEVVTVAVRRLELSKSGEASLLEWIPKGMKLLPNTAACFTAEEAIRTARLGRELEMGDLVKLEVIGDRRTLFPDVEGLVAAAKVLVKEGFTVLPYTNDDPVTAKKLEDAGCAAVMPLGAPIGSGLGIRNPYNLRIIMETVKVPVLVDAGVGTASDAAVAMELGAVAVLMNTAIAEARDPVLMAEAMRAGVEGGRKAYLAGRIPTKLHASASSPMTGLIGT.

The Schiff-base intermediate with DXP role is filled by Lys98. 1-deoxy-D-xylulose 5-phosphate is bound by residues Gly159, 185-186 (AG), and 207-208 (NT).

It belongs to the ThiG family. Homotetramer. Forms heterodimers with either ThiH or ThiS.

The protein resides in the cytoplasm. The enzyme catalyses [ThiS sulfur-carrier protein]-C-terminal-Gly-aminoethanethioate + 2-iminoacetate + 1-deoxy-D-xylulose 5-phosphate = [ThiS sulfur-carrier protein]-C-terminal Gly-Gly + 2-[(2R,5Z)-2-carboxy-4-methylthiazol-5(2H)-ylidene]ethyl phosphate + 2 H2O + H(+). Its pathway is cofactor biosynthesis; thiamine diphosphate biosynthesis. Catalyzes the rearrangement of 1-deoxy-D-xylulose 5-phosphate (DXP) to produce the thiazole phosphate moiety of thiamine. Sulfur is provided by the thiocarboxylate moiety of the carrier protein ThiS. In vitro, sulfur can be provided by H(2)S. The protein is Thiazole synthase of Anaeromyxobacter sp. (strain Fw109-5).